The chain runs to 153 residues: Endoribonuclease YbeY (153 aa).

Residues H114, H118, and H124 each coordinate Zn(2+).

It belongs to the endoribonuclease YbeY family. The cofactor is Zn(2+).

The protein localises to the cytoplasm. In terms of biological role, single strand-specific metallo-endoribonuclease involved in late-stage 70S ribosome quality control and in maturation of the 3' terminus of the 16S rRNA. In Shewanella sp. (strain MR-7), this protein is Endoribonuclease YbeY.